Consider the following 294-residue polypeptide: Mitochondrial glycine transporter (294 aa).

Solcar repeat units lie at residues 5–84 (RRAT…IRQA), 102–186 (LNMY…MKVL), and 208–292 (ASTL…IVKK). Helical transmembrane passes span 11–36 (LIGGFSGGLVSAIILQPFDLLKTRLQ), 59–85 (GALPSCIRTSVGSAMYLTMLNSIRQAI), 108–133 (MFSGAVTRALTGLITMPITVIKVRYE), 161–184 (GFGATALRDAPYAGLYMLFYDRMK), 212–238 (INGSSAFSAAVIATSITAPFDTVKTRM), and 267–285 (GISLRLTRKAFSAGIAWGI).

It belongs to the mitochondrial carrier (TC 2.A.29) family. SLC25A38 subfamily.

The protein localises to the mitochondrion inner membrane. It carries out the reaction glycine(in) = glycine(out). Mitochondrial glycine transporter that imports glycine into the mitochondrial matrix. Plays an important role in providing glycine for the first enzymatic step in heme biosynthesis, the condensation of glycine with succinyl-CoA to produce 5-aminolevulinate (ALA) in the mitochondrial matrix. The protein is Mitochondrial glycine transporter of Kluyveromyces lactis (strain ATCC 8585 / CBS 2359 / DSM 70799 / NBRC 1267 / NRRL Y-1140 / WM37) (Yeast).